A 365-amino-acid polypeptide reads, in one-letter code: Patr class I histocompatibility antigen, A-126 alpha chain (365 aa).

A signal peptide spans 1–24; it reads MAVMAPRTLVLLLSGALALTQTWA. The interval 25–114 is alpha-1; sequence GSHSMRYFST…LRGYYNQSED (90 aa). The Extracellular segment spans residues 25 to 308; the sequence is GSHSMRYFST…EPSSQPTIPI (284 aa). The N-linked (GlcNAc...) asparagine glycan is linked to N110. Residues 115-206 form an alpha-2 region; sequence GSHTIQLMFG…ENGKETLQRT (92 aa). 2 disulfides stabilise this stretch: C125/C188 and C227/C283. Residues 207–298 form an alpha-3 region; it reads DPPKTHMTHH…GLPKPLTLRW (92 aa). The Ig-like C1-type domain maps to 209–295; that stretch reads PKTHMTHHPI…QHEGLPKPLT (87 aa). Residues 299-308 are connecting peptide; the sequence is EPSSQPTIPI. A helical transmembrane segment spans residues 309 to 332; that stretch reads VGIIAGLVLLGAVITGAVVAAVMW. The Cytoplasmic segment spans residues 333–365; sequence RRKSSDRKGGSYSQAASSDSAQGSDVSLTACKV. A disordered region spans residues 338-365; that stretch reads DRKGGSYSQAASSDSAQGSDVSLTACKV. Residues 342 to 359 show a composition bias toward low complexity; sequence GSYSQAASSDSAQGSDVS. S343 is subject to Phosphoserine. Y344 carries the phosphotyrosine modification. 5 positions are modified to phosphoserine: S345, S349, S352, S356, and S359.

The protein belongs to the MHC class I family. In terms of assembly, heterodimer of an alpha chain and a beta chain (beta-2-microglobulin).

Its subcellular location is the membrane. In terms of biological role, involved in the presentation of foreign antigens to the immune system. This is Patr class I histocompatibility antigen, A-126 alpha chain (Patr-A) from Pan troglodytes (Chimpanzee).